Consider the following 358-residue polypeptide: Cytochrome c peroxidase, mitochondrial (358 aa).

Residues 1-38 (MAASRTATRTLRALRTSTRPALTAAPRAAFRQGGRRLY) constitute a mitochondrion transit peptide. H119 serves as the catalytic Proton acceptor. The disordered stretch occupies residues 192–214 (PYRPGRQDRDAAGCTPDGRLPDA). H242 lines the heme b pocket. W258 functions as the Tryptophan radical intermediate in the catalytic mechanism.

Belongs to the peroxidase family. Cytochrome c peroxidase subfamily. Forms a one-to-one complex with cytochrome c. It depends on heme b as a cofactor.

It is found in the mitochondrion matrix. The protein resides in the mitochondrion intermembrane space. The enzyme catalyses 2 Fe(II)-[cytochrome c] + H2O2 + 2 H(+) = 2 Fe(III)-[cytochrome c] + 2 H2O. Its function is as follows. Destroys radicals which are normally produced within the cells and which are toxic to biological systems. This Neurospora crassa (strain ATCC 24698 / 74-OR23-1A / CBS 708.71 / DSM 1257 / FGSC 987) protein is Cytochrome c peroxidase, mitochondrial (ccp-1).